Here is a 3411-residue protein sequence, read N- to C-terminus: Genome polyprotein (3411 aa).

Residues 1 to 104 (MSGRKAQGKT…LSSRKRRSHD (104 aa)) are Cytoplasmic-facing. Residues 38-72 (PGPSRGVQGFISFFSFNILTGKKITAHLKRLWKML) form a hydrophobic; homodimerization of capsid protein C region. Residues 102 to 121 (SHDVLTVQFLILGMLLMAGG) constitute a propeptide, ER anchor for the capsid protein C, removed in mature form by serine protease NS3. A helical transmembrane segment spans residues 105 to 125 (VLTVQFLILGMLLMAGGVTLV). Topologically, residues 126-244 (RKNRWLLLNV…GERQLQKIER (119 aa)) are extracellular. N-linked (GlcNAc...) asparagine; by host glycosylation is found at Asn134 and Asn150. Residues 245–265 (WLVRNPFFAVTALAIAYLVGS) form a helical membrane-spanning segment. Residues 266-270 (NMTQR) lie on the Cytoplasmic side of the membrane. A helical membrane pass occupies residues 271–285 (VVIALLVLAVGPAYS). Over 286–730 (AHCIGITDRD…TVFGSAFQGL (445 aa)) the chain is Extracellular. Intrachain disulfides connect Cys288-Cys315, Cys345-Cys401, Cys345-Cys406, Cys359-Cys390, Cys377-Cys401, Cys377-Cys406, Cys467-Cys568, and Cys585-Cys615. Residues 383–396 (DRGWGNGCGLFGKG) are fusion peptide. The helical transmembrane segment at 731 to 751 (FGGLSWITKVIMGAVLIWVGI) threads the bilayer. At 752-757 (NTRNMT) the chain is on the extracellular side. A helical transmembrane segment spans residues 758-778 (MSMSMILVGVIMMFLSLGVGA). Topologically, residues 779-1132 (DQGCAINFGK…LVRSWVTAGE (354 aa)) are extracellular. Disulfide bonds link Cys782-Cys793, Cys833-Cys921, Cys957-Cys1002, Cys1058-Cys1107, Cys1069-Cys1091, and Cys1090-Cys1094. N-linked (GlcNAc...) asparagine; by host glycosylation is found at Asn908 and Asn986. Residues 1133–1153 (IHAVPFGLVSMMIAMEVVLRK) traverse the membrane as a helical segment. At 1154 to 1201 (RQGPKQMLVGGMVLLGAMLVGQVTLLDLLKLTMAVGLHFHEMNNGGDA) the chain is on the cytoplasmic side. A helical transmembrane segment spans residues 1202–1222 (MYMALIAAFSIRPGLLIGFGL). Residues 1223–1287 (RTLWSPRERL…ILPLMALLTP (65 aa)) are Lumenal-facing. Residues 1288-1308 (VTMAEVRLATMLLCAVVIIGV) traverse the membrane as a helical segment. At 1309–1355 (LHQNSKDTSMQKTIPLVALTLTSYLGLTQPFLGLCAFLATRIFGRRS) the chain is on the cytoplasmic side. Residues 1356-1376 (IPVNEALAAAGLVGVLAGLAF) traverse the membrane as a helical segment. At 1377–1378 (QE) the chain is on the lumenal side. Residues 1379 to 1399 (MENFLGPIAVGGILMMLVSVA) traverse the membrane as a helical segment. Topologically, residues 1400-1456 (GRVDGLELKKLGEVSWEEEAEISGSSARYDVALSEQGEFKLLSEEKVPWDQVVMTSL) are cytoplasmic. Positions 1407-1446 (LKKLGEVSWEEEAEISGSSARYDVALSEQGEFKLLSEEKV) are interacts with and activates NS3 protease. Positions 1457–1477 (ALVGAAIHPSALLLVLAGWLF) form an intramembrane region, helical. Residues 1478-2157 (HVKGARRSGD…RNALSMMPEA (680 aa)) are Cytoplasmic-facing. One can recognise a Peptidase S7 domain in the interval 1485–1665 (SGDVLWDIPT…EVKEEGKEEL (181 aa)). Catalysis depends on charge relay system; for serine protease NS3 activity residues His1537, Asp1561, and Ser1622. Positions 1669–1825 (PTMLKKGMTT…HSNGEIEDVQ (157 aa)) constitute a Helicase ATP-binding domain. Residues 1673–1676 (KKGM) are important for RNA-binding. 1682–1689 (YHPGAGKT) serves as a coordination point for ATP. The short motif at 1773–1776 (DEAH) is the DEAH box element. A Helicase C-terminal domain is found at 1820 to 1997 (EIEDVQTDIP…VRGGMVAPLY (178 aa)). Lys1877 carries the N6-acetyllysine; by host modification. A helical membrane pass occupies residues 2158-2178 (MTIVMLFILAGLLTSGMVIFF). Residues 2179–2186 (MSPKGISR) lie on the Lumenal side of the membrane. The helical intramembrane region spans 2187–2207 (MSMAMGTMAGCGYLMFLGGAK). Topologically, residues 2208 to 2209 (PT) are lumenal. The helical transmembrane segment at 2210-2230 (HISYIMLIFFVLMVVVIPEPG) threads the bilayer. The Cytoplasmic portion of the chain corresponds to 2231-2241 (QQRSIQDNQVA). Residues 2242–2262 (YLIIGILTLVSVVAANELGML) traverse the membrane as a helical segment. At 2263–2293 (ERTKEDLFGKKNLIPSSASPWSWPDLDLKPG) the chain is on the lumenal side. The helical intramembrane region spans 2294-2314 (AAWTVYVGIVTILSPMLHHWI). Residues 2315 to 2360 (KVEYGNLSLSGIAQSASVLSFMDKGIPFMKMNISVIILLVSGWNSI) are Lumenal-facing. The helical transmembrane segment at 2361–2380 (TVMPLLCGIGCAMLHWTLIL) threads the bilayer. At 2381–2421 (PGIKAQQSKLPQRRVFHGVAKNPVVDGNPTVDIEEAPEMPA) the chain is on the cytoplasmic side. A helical membrane pass occupies residues 2422–2442 (LYEKKLALYLLLALSLASVAM). Over 2443–2445 (CRT) the chain is Lumenal. A helical transmembrane segment spans residues 2446-2466 (PFSLAEGIVLASAALGPLIEG). Residues 2467–3411 (NTSLLWNGPM…DADLQPGELI (945 aa)) lie on the Cytoplasmic side of the membrane. Residues 2507 to 2771 (GRANGKTLGE…DVILPIGTRS (265 aa)) enclose the mRNA cap 0-1 NS5-type MT domain. An S-adenosyl-L-methionine-binding site is contributed by Ser2562. Ser2562 is subject to Phosphoserine. Lys2567 acts as the For 2'-O-MTase activity in catalysis. Gly2592, Trp2593, Thr2610, Leu2611, Asp2637, and Ile2638 together coordinate S-adenosyl-L-methionine. Residue Asp2652 is the For 2'-O-MTase activity of the active site. Residue Ile2653 coordinates S-adenosyl-L-methionine. Catalysis depends on for 2'-O-MTase activity residues Lys2688 and Glu2724. Tyr2726 is an S-adenosyl-L-methionine binding site. A Nuclear localization signal motif is present at residues 2878–2911 (RKIMKVVNRWLFRHLAREKNPRLCTKEEFIAKVR). The Zn(2+) site is built by Glu2945, His2949, Cys2954, and Cys2957. One can recognise a RdRp catalytic domain in the interval 3035 to 3187 (GGFYADDTAG…RPIDDRFGMA (153 aa)). Zn(2+) contacts are provided by His3222, Cys3238, and Cys3357.

In the N-terminal section; belongs to the class I-like SAM-binding methyltransferase superfamily. mRNA cap 0-1 NS5-type methyltransferase family. As to quaternary structure, homodimer. Interacts (via N-terminus) with host EXOC1 (via C-terminus); this interaction results in EXOC1 degradation through the proteasome degradation pathway. In terms of assembly, forms heterodimers with envelope protein E in the endoplasmic reticulum and Golgi. Homodimer; in the endoplasmic reticulum and Golgi. Interacts with protein prM. Interacts with non-structural protein 1. As to quaternary structure, homodimer; Homohexamer when secreted. Interacts with envelope protein E. In terms of assembly, interacts (via N-terminus) with serine protease NS3. Forms a heterodimer with serine protease NS3. May form homooligomers. As to quaternary structure, forms a heterodimer with NS2B. Interacts with non-structural protein 2A (via N-terminus). Interacts with NS4B. Interacts with unphosphorylated RNA-directed RNA polymerase NS5; this interaction stimulates RNA-directed RNA polymerase NS5 guanylyltransferase activity. NS3 interacts with host PDCD6IP; this interaction contributes to virion release. In terms of assembly, interacts with serine protease NS3. Homodimer. Interacts with host STAT2; this interaction prevents the establishment of cellular antiviral state. Interacts with serine protease NS3. Interacts with host TRIM23; this interaction leads to NS5 ubiquitination. Specific enzymatic cleavages in vivo yield mature proteins. The nascent capsid protein C contains a C-terminal hydrophobic domain that act as a signal sequence for translocation of prM into the lumen of the ER. Mature capsid protein C is cleaved at a site upstream of this hydrophobic domain by NS3. prM is cleaved in post-Golgi vesicles by a host furin, releasing the mature small envelope protein M, and peptide pr. Non-structural protein 2A-alpha, a C-terminally truncated form of non-structural protein 2A, results from partial cleavage by NS3. Specific enzymatic cleavages in vivo yield mature proteins peptide 2K acts as a signal sequence and is removed from the N-terminus of NS4B by the host signal peptidase in the ER lumen. Signal cleavage at the 2K-4B site requires a prior NS3 protease-mediated cleavage at the 4A-2K site. In terms of processing, cleaved in post-Golgi vesicles by a host furin, releasing the mature small envelope protein M, and peptide pr. This cleavage is incomplete as up to 30% of viral particles still carry uncleaved prM. Post-translationally, N-glycosylated. N-glycosylated. The excreted form is glycosylated and this is required for efficient secretion of the protein from infected cells. In terms of processing, polyubiquitinated; ubiquitination is probably mediated by host TRIM23 and is prerequisite for NS5-STAT2 interaction. NS5 is not ISGylated or sumoylated. Post-translationally, acetylated by host KAT5. Acetylation modulates NS3 RNA-binding and unwinding activities and plays an important positive role for viral replication. Phosphorylated on serines residues. This phosphorylation may trigger NS5 nuclear localization.

The protein resides in the virion. It localises to the host nucleus. Its subcellular location is the host cytoplasm. The protein localises to the host perinuclear region. It is found in the secreted. The protein resides in the virion membrane. It localises to the host endoplasmic reticulum membrane. It carries out the reaction Selective hydrolysis of -Xaa-Xaa-|-Yaa- bonds in which each of the Xaa can be either Arg or Lys and Yaa can be either Ser or Ala.. It catalyses the reaction RNA(n) + a ribonucleoside 5'-triphosphate = RNA(n+1) + diphosphate. The catalysed reaction is a ribonucleoside 5'-triphosphate + H2O = a ribonucleoside 5'-diphosphate + phosphate + H(+). The enzyme catalyses ATP + H2O = ADP + phosphate + H(+). It carries out the reaction a 5'-end (5'-triphosphoguanosine)-ribonucleoside in mRNA + S-adenosyl-L-methionine = a 5'-end (N(7)-methyl 5'-triphosphoguanosine)-ribonucleoside in mRNA + S-adenosyl-L-homocysteine. It catalyses the reaction a 5'-end (N(7)-methyl 5'-triphosphoguanosine)-ribonucleoside in mRNA + S-adenosyl-L-methionine = a 5'-end (N(7)-methyl 5'-triphosphoguanosine)-(2'-O-methyl-ribonucleoside) in mRNA + S-adenosyl-L-homocysteine + H(+). Functionally, plays a role in virus budding by binding to the cell membrane and gathering the viral RNA into a nucleocapsid that forms the core of a mature virus particle. During virus entry, may induce genome penetration into the host cytoplasm after hemifusion induced by the surface proteins. Can migrate to the cell nucleus where it modulates host functions. In terms of biological role, inhibits RNA silencing by interfering with host Dicer. Its function is as follows. Prevents premature fusion activity of envelope proteins in trans-Golgi by binding to envelope protein E at pH6.0. After virion release in extracellular space, gets dissociated from E dimers. Acts as a chaperone for envelope protein E during intracellular virion assembly by masking and inactivating envelope protein E fusion peptide. prM is the only viral peptide matured by host furin in the trans-Golgi network probably to avoid catastrophic activation of the viral fusion activity in acidic Golgi compartment prior to virion release. prM-E cleavage is inefficient, and many virions are only partially matured. These uncleaved prM would play a role in immune evasion. Functionally, may play a role in virus budding. Exerts cytotoxic effects by activating a mitochondrial apoptotic pathway through M ectodomain. May display a viroporin activity. In terms of biological role, binds to host cell surface receptor and mediates fusion between viral and cellular membranes. Envelope protein is synthesized in the endoplasmic reticulum in the form of heterodimer with protein prM. They play a role in virion budding in the ER, and the newly formed immature particle is covered with 60 spikes composed of heterodimer between precursor prM and envelope protein E. The virion is transported to the Golgi apparatus where the low pH causes dissociation of PrM-E heterodimers and formation of E homodimers. prM-E cleavage is inefficient, and many virions are only partially matured. These uncleaved prM would play a role in immune evasion. Its function is as follows. Involved in immune evasion, pathogenesis and viral replication. Once cleaved off the polyprotein, is targeted to three destinations: the viral replication cycle, the plasma membrane and the extracellular compartment. Essential for viral replication. Required for formation of the replication complex and recruitment of other non-structural proteins to the ER-derived membrane structures. Excreted as a hexameric lipoparticle that plays a role against host immune response. Antagonizing the complement function. Binds to the host macrophages and dendritic cells. Inhibits signal transduction originating from Toll-like receptor 3 (TLR3). Component of the viral RNA replication complex that functions in virion assembly and antagonizes the host immune response. Functionally, required cofactor for the serine protease function of NS3. May have membrane-destabilizing activity and form viroporins. In terms of biological role, displays three enzymatic activities: serine protease, NTPase and RNA helicase. NS3 serine protease, in association with NS2B, performs its autocleavage and cleaves the polyprotein at dibasic sites in the cytoplasm: C-prM, NS2A-NS2B, NS2B-NS3, NS3-NS4A, NS4A-2K and NS4B-NS5. NS3 RNA helicase binds RNA and unwinds dsRNA in the 3' to 5' direction. Also plays a role in virus assembly. Its function is as follows. Regulates the ATPase activity of the NS3 helicase activity. NS4A allows NS3 helicase to conserve energy during unwinding. Functions as a signal peptide for NS4B and is required for the interferon antagonism activity of the latter. Functionally, induces the formation of ER-derived membrane vesicles where the viral replication takes place. Inhibits interferon (IFN)-induced host STAT1 phosphorylation and nuclear translocation, thereby preventing the establishment of cellular antiviral state by blocking the IFN-alpha/beta pathway. In terms of biological role, replicates the viral (+) and (-) RNA genome, and performs the capping of genomes in the cytoplasm. NS5 methylates viral RNA cap at guanine N-7 and ribose 2'-O positions. Besides its role in RNA genome replication, also prevents the establishment of cellular antiviral state by blocking the interferon-alpha/beta (IFN-alpha/beta) signaling pathway. IFN-I induces binding of NS5 to host IFN-activated transcription factor STAT2, preventing its transcriptional activity. Host TRIM23 is the E3 ligase that interacts with and polyubiquitinates NS5 to promote its binding to STAT2 and trigger IFN-I signaling inhibition. This chain is Genome polyprotein, found in Yellow fever virus (isolate Ivory Coast/85-82H/1982) (YFV).